A 182-amino-acid chain; its full sequence is Mesencephalic astrocyte-derived neurotrophic factor (182 aa).

The signal sequence occupies residues 1-24; it reads MRRMWATQGLAVALALSVLPGSRA. 4 cysteine pairs are disulfide-bonded: Cys30-Cys117, Cys33-Cys106, Cys64-Cys75, and Cys151-Cys154. Tyr76 is modified (phosphotyrosine). Positions 96 to 158 are interacts with ERN1, EIF2AK3 and ATF6; the sequence is LAHHIPVEKI…ETCKGCAEKS (63 aa). The segment at 129–172 is interacts with HSPA5; it reads TVDLKKLRVKELKKILDDWGETCKGCAEKSDYIRKINELMPKYA.

Belongs to the ARMET family. As to quaternary structure, interacts directly (via SAP domain) with HSPA5/BiP; the interaction inhibits ATP binding to HSPA5/BiP and subsequent nucleotide exchange. Component of a complex containing at least CRELD2, MANF, MATN3 and PDIA4. Interacts (via C-terminus) with ERN1 (via luminal domain); the interaction is decreased in the presence of increasing concentrations of Ca(2+). In terms of processing, may contain sialic acid residues.

The protein localises to the secreted. It localises to the endoplasmic reticulum lumen. Its subcellular location is the sarcoplasmic reticulum lumen. Its function is as follows. Selectively promotes the survival of dopaminergic neurons of the ventral mid-brain. Modulates GABAergic transmission to the dopaminergic neurons of the substantia nigra. Enhances spontaneous, as well as evoked, GABAergic inhibitory postsynaptic currents in dopaminergic neurons. Inhibits cell proliferation and endoplasmic reticulum (ER) stress-induced cell death. Retained in the ER/sarcoplasmic reticulum (SR) through association with the endoplasmic reticulum chaperone protein HSPA5 under normal conditions. Stabilizes HSPA5/BiP in its substrate-bound ADP state, which facilitates HSPA5/BiP incorporation into chaperone-client complexes during endoplasmic reticulum stress, its interaction with HSPA5/BiP inhibits ATP binding to HSPA5/BiP and subsequent nucleotide exchange. As a result acts as a repressor of the unfolded protein response (UPR) pathway. Up-regulated and secreted by the ER/SR in response to ER stress and hypoxia. Following secretion by the ER/SR, directly binds to 3-O-sulfogalactosylceramide, a lipid sulfatide in the outer cell membrane of target cells. Sulfatide binding promotes its cellular uptake by endocytosis, and is required for its role in alleviating ER stress and cell toxicity under hypoxic and ER stress conditions. Essential for embryonic lung development. Required for the correct postnatal temporal and structural development of splenic white pulp. Required for the repair-associated myeloid response in skeletal muscle, acts as a regulator of phenotypic transition towards prorepair macrophages in response to muscle injury and as a result limits excessive proinflammatory signaling. Represses RELA expression and therefore NF-kB signaling in the myocardium, as a result limits macrophage infiltration of injured tissue and M1 macrophage differentiation in response to myocardial injury. Required for endochondral ossification in long bones and the skull during postnatal development. This chain is Mesencephalic astrocyte-derived neurotrophic factor, found in Homo sapiens (Human).